The chain runs to 122 residues: Large ribosomal subunit protein uL14 (122 aa).

It belongs to the universal ribosomal protein uL14 family. As to quaternary structure, part of the 50S ribosomal subunit. Forms a cluster with proteins L3 and L19. In the 70S ribosome, L14 and L19 interact and together make contacts with the 16S rRNA in bridges B5 and B8.

Its function is as follows. Binds to 23S rRNA. Forms part of two intersubunit bridges in the 70S ribosome. This chain is Large ribosomal subunit protein uL14, found in Clostridium tetani (strain Massachusetts / E88).